The following is a 206-amino-acid chain: MTDLIAKTAIDRRLAEIISPVIEDLGFELVRIRLQGGKTATLQIMADRPEGGINVDDCADISTAVSAILDVEDPLEDAYHLEVSSPGIDRPLTRLKDFETFEGYEARLETNQPIDGRKRFKGVLAGVEKGEGGDEVLLNIEEGGETQTIGLNFDWLSDAKLVLTDELIAEMLRQKKDAGVQIENLDEAAFDEIETEAGEDNAAAKE.

It belongs to the RimP family.

The protein localises to the cytoplasm. Functionally, required for maturation of 30S ribosomal subunits. This Paracoccus denitrificans (strain Pd 1222) protein is Ribosome maturation factor RimP.